Here is a 532-residue protein sequence, read N- to C-terminus: All-trans-retinyl ester 13-cis isomerohydrolase (532 aa).

Cys-112 is lipidated: S-palmitoyl cysteine; in membrane form. 3 residues coordinate Fe cation: His-180, His-241, and His-313. Residue Cys-329 is the site of S-palmitoyl cysteine; in membrane form attachment. Residue His-527 coordinates Fe cation.

Belongs to the carotenoid oxygenase family. Requires Fe(2+) as cofactor. Palmitoylated. As to expression, predominantly expressed in brain. Expressed at a low level in the eye.

Its subcellular location is the cytoplasm. The protein localises to the cell membrane. It catalyses the reaction an all-trans-retinyl ester + H2O = 13-cis-retinol + a fatty acid + H(+). The enzyme catalyses lutein = (3R,3'S)-zeaxanthin. Specifically generates 13-cis retinol, a stereoisomeric form of retinoic acid. Capable of catalyzing the isomerization of lutein to meso-zeaxanthin an eye-specific carotenoid. The protein is All-trans-retinyl ester 13-cis isomerohydrolase (rpe65b) of Danio rerio (Zebrafish).